We begin with the raw amino-acid sequence, 402 residues long: uncharacterized protein (402 aa).

A run of 9 helical transmembrane segments spans residues 13 to 33 (IGVL…VNLA), 68 to 88 (FFIQ…GMVV), 108 to 128 (LMAL…GDIL), 149 to 169 (LLIW…LTSF), 223 to 243 (LNYF…AAAA), 261 to 281 (LWMA…VTDK), 283 to 303 (ICLL…VVYL), 327 to 347 (YLMQ…GLYG), and 353 to 373 (AGVL…HLWL).

It is found in the cell membrane. In terms of biological role, involved in transport. This is an uncharacterized protein from Bacillus subtilis (strain 168).